The sequence spans 436 residues: Glutamyl-tRNA(Gln) amidotransferase subunit D (436 aa).

The region spanning 91-420 is the Asparaginase/glutaminase domain; sequence QNISIISTGG…GEVAKLMNKN (330 aa). Residues T101, T177, D178, and K254 contribute to the active site.

This sequence belongs to the asparaginase 1 family. GatD subfamily. As to quaternary structure, heterodimer of GatD and GatE.

The enzyme catalyses L-glutamyl-tRNA(Gln) + L-glutamine + ATP + H2O = L-glutaminyl-tRNA(Gln) + L-glutamate + ADP + phosphate + H(+). In terms of biological role, allows the formation of correctly charged Gln-tRNA(Gln) through the transamidation of misacylated Glu-tRNA(Gln) in organisms which lack glutaminyl-tRNA synthetase. The reaction takes place in the presence of glutamine and ATP through an activated gamma-phospho-Glu-tRNA(Gln). The GatDE system is specific for glutamate and does not act on aspartate. In Methanobrevibacter smithii (strain ATCC 35061 / DSM 861 / OCM 144 / PS), this protein is Glutamyl-tRNA(Gln) amidotransferase subunit D.